The following is a 1050-amino-acid chain: MEVAVEKAVAAAAAASAAASGGPSAAPSGENEAESRQGPDSERGGEAARLNLLDTCAVCHQNIQSRAPKLLPCLHSFCQRCLPAPQRYLMLPAPMLGSAETPPPVPAPGSPVSGSSPFATQVGVIRCPVCSQECAERHIIDNFFVKDTTEVPSSTVEKSNQVCTSCEDNAEANGFCVECVEWLCKTCIRAHQRVKFTKDHTVRQKEEVSPEAVGVTSQRPVFCPFHKKEQLKLYCETCDKLTCRDCQLLEHKEHRYQFIEEAFQNQKVIIDTLITKLMEKTKYIKFTGNQIQNRIIEVNQNQKQVEQDIKVAIFTLMVEINKKGKALLHQLESLAKDHRMKLMQQQQEVAGLSKQLEHVMHFSKWAVSSGSSTALLYSKRLITYRLRHLLRARCDASPVTNNTIQFHCDPSFWAQNIINLGSLVIEDKESQPQMPKQNPVVEQNSQPPSGLSSNQLSKFPTQISLAQLRLQHMQQQVMAQRQQVQRRPAPVGLPNPRMQGPIQQPSISHQQPPPRLINFQNHSPKPNGPVLPPHPQQLRYPPNQNIPRQAIKPNPLQMAFLAQQAIKQWQISSGQGTPSTTNSTSSTPSSPTITSAAGYDGKAFGSPMIDLSSPVGGSYNLPSLPDIDCSSTIMLDNIVRKDTNIDHGQPRPPSNRTVQSPNSSVPSPGLAGPVTMTSVHPPIRSPSASSVGSRGSSGSSSKPAGADSTHKVPVVMLEPIRIKQENSGPPENYDFPVVIVKQESDEESRPQNANYPRSILTSLLLNSSQSSTSEETVLRSDAPDSTGDQPGLHQDNSSNGKSEWLDPSQKSPLHVGETRKEDDPNEDWCAVCQNGGELLCCEKCPKVFHLSCHVPTLTNFPSGEWICTFCRDLSKPEVEYDCDAPSHNSEKKKTEGLVKLTPIDKRKCERLLLFLYCHEMSLAFQDPVPLTVPDYYKIIKNPMDLSTIKKRLQEDYSMYSKPEDFVADFRLIFQNCAEFNEPDSEVANAGIKLENYFEELLKNLYPEKRFPKPEFRNESEDNKFSDDSDDDFVQPRKKRLKSIEERQLLK.

A Glycyl lysine isopeptide (Lys-Gly) (interchain with G-Cter in SUMO2) cross-link involves residue Lys7. Low complexity predominate over residues 15 to 30; that stretch reads ASAAASGGPSAAPSGE. Residues 15–44 are disordered; that stretch reads ASAAASGGPSAAPSGENEAESRQGPDSERG. The segment covering 33–44 has biased composition (basic and acidic residues); it reads AESRQGPDSERG. The RING-type zinc-finger motif lies at 56–82; the sequence is CAVCHQNIQSRAPKLLPCLHSFCQRCL. A Phosphothreonine modification is found at Thr101. Phosphoserine is present on Ser110. 2 consecutive B box-type zinc fingers follow at residues 158-211 and 218-259; these read KSNQ…VSPE and QRPV…YQFI. Zn(2+) is bound by residues Cys163, Cys166, Cys187, and His200. Residue Lys205 forms a Glycyl lysine isopeptide (Lys-Gly) (interchain with G-Cter in SUMO2) linkage. Zn(2+)-binding residues include Cys223, His226, Cys246, and His251. Lys276 is covalently cross-linked (Glycyl lysine isopeptide (Lys-Gly) (interchain with G-Cter in SUMO2)). Residues 289-359 adopt a coiled-coil conformation; the sequence is NQIQNRIIEV…AGLSKQLEHV (71 aa). The interval 429-456 is disordered; the sequence is ESQPQMPKQNPVVEQNSQPPSGLSSNQL. Positions 431-456 are enriched in polar residues; the sequence is QPQMPKQNPVVEQNSQPPSGLSSNQL. Glycyl lysine isopeptide (Lys-Gly) (interchain with G-Cter in SUMO2) cross-links involve residues Lys436 and Lys458. Arg469 carries the omega-N-methylarginine modification. Composition is skewed to low complexity over residues 476–490 and 499–510; these read QVMAQRQQVQRRPAP and QGPIQQPSISHQ. The tract at residues 476–550 is disordered; sequence QVMAQRQQVQ…PPNQNIPRQA (75 aa). Over residues 526–535 the composition is skewed to pro residues; it reads PNGPVLPPHP. Lys552 is covalently cross-linked (Glycyl lysine isopeptide (Lys-Gly) (interchain with G-Cter in SUMO2)). The interval 571–594 is disordered; it reads ISSGQGTPSTTNSTSSTPSSPTIT. Over residues 577-594 the composition is skewed to low complexity; the sequence is TPSTTNSTSSTPSSPTIT. A Glycyl lysine isopeptide (Lys-Gly) (interchain with G-Cter in SUMO2) cross-link involves residue Lys641. The interval 643–712 is disordered; that stretch reads TNIDHGQPRP…PAGADSTHKV (70 aa). 3 positions are modified to phosphoserine: Ser654, Ser660, and Ser667. The span at 654 to 666 shows a compositional bias: polar residues; the sequence is SNRTVQSPNSSVP. Residues 685-707 are compositionally biased toward low complexity; sequence SPSASSVGSRGSSGSSSKPAGAD. Glycyl lysine isopeptide (Lys-Gly) (interchain with G-Cter in SUMO2) cross-links involve residues Lys702 and Lys711. A Glycyl lysine isopeptide (Lys-Gly) (interchain with G-Cter in SUMO1); alternate cross-link involves residue Lys723. Lys723 is covalently cross-linked (Glycyl lysine isopeptide (Lys-Gly) (interchain with G-Cter in SUMO2); alternate). A Glycyl lysine isopeptide (Lys-Gly) (interchain with G-Cter in SUMO2) cross-link involves residue Lys741. Ser744 is subject to Phosphoserine. Residues 754–779 form a nuclear receptor binding site (NRBS) region; that stretch reads NYPRSILTSLLLNSSQSSTSEETVLR. The tract at residues 766 to 824 is disordered; it reads NSSQSSTSEETVLRSDAPDSTGDQPGLHQDNSSNGKSEWLDPSQKSPLHVGETRKEDDP. A Phosphoserine; by ATM modification is found at Ser768. Lys801 participates in a covalent cross-link: Glycyl lysine isopeptide (Lys-Gly) (interchain with G-Cter in SUMO2). Phosphoserine is present on Ser808. A Glycyl lysine isopeptide (Lys-Gly) (interchain with G-Cter in SUMO2) cross-link involves residue Lys810. Position 811 is a phosphoserine (Ser811). Thr818 carries the post-translational modification Phosphothreonine. Residues 826-873 form a PHD-type zinc finger; it reads EDWCAVCQNGGELLCCEKCPKVFHLSCHVPTLTNFPSGEWICTFCRDL. The interaction with histone H3 that is not methylated at 'Lys-4' (H3K4me0) stretch occupies residues 834–840; sequence NGGELLC. Lys875 participates in a covalent cross-link: Glycyl lysine isopeptide (Lys-Gly) (interchain with G-Cter in SUMO2). The Nuclear localization signal motif lies at 891-907; sequence KKKTEGLVKLTPIDKRK. Positions 899–1004 constitute a Bromo domain; it reads KLTPIDKRKC…NYFEELLKNL (106 aa). Residue Lys949 forms a Glycyl lysine isopeptide (Lys-Gly) (interchain with G-Cter in SUMO2) linkage. Residues 979–980 are interaction with histone H3 that is acetylated at 'Lys-23' (H3K23ac); the sequence is FN. Residue Lys992 forms a Glycyl lysine isopeptide (Lys-Gly) (interchain with G-Cter in SUMO2) linkage. Over residues 1011 to 1026 the composition is skewed to basic and acidic residues; sequence PKPEFRNESEDNKFSD. The disordered stretch occupies residues 1011–1036; it reads PKPEFRNESEDNKFSDDSDDDFVQPR. Phosphoserine is present on residues Ser1019, Ser1025, and Ser1028. Lys1041 participates in a covalent cross-link: Glycyl lysine isopeptide (Lys-Gly) (interchain with G-Cter in SUMO2). Ser1042 carries the post-translational modification Phosphoserine.

Interacts with CARM1, NCOA2/GRIP1, PML, KAT5/TIP60, BRD7, CBX1, CBX3 and CBX5. Part of a coactivator complex containing TRIM24, NCOA2 and CARM1. Interacts with NR3C2/MCR. Interacts with the ligand-binding domain of estrogen receptors (in vitro). Interaction with DNA-bound estrogen receptors requires the presence of estradiol. Interacts with AR and p53/TP53. Interacts (via bromo domain) with histone H3 (via N-terminus), provided that it is not methylated at 'Lys-4' (H3K4me0). Does not interact with histone H3 that is methylated at 'Lys-4' (H3K4me1, H3K4me2 or H3K4me3). Interacts (via bromo domain) with histone H3 (via N-terminus) that is acetylated at 'Lys-23' (H3K23ac). Has the highest affinity for histone H3 that is both unmodified at 'Lys-4' (H3K4me0) and acetylated at 'Lys-23' (H3K23ac). Has very low affinity for histone H3 that is methylated at 'Lys-9' (H3K9me), or acetylated at both 'Lys-9' (H3K9ac) and 'Lys-14' (H3K14ac), or acetylated at 'Lys-27' (H3K27ac) (in vitro). Interacts with TRIM16. Phosphorylated at Ser-768 by ATM kinase induces ubiquitination and degradation during DNA damage. Post-translationally, sumoylated. In terms of processing, undergoes ubiquitination-mediated degradation in response to DNA damage.

Its subcellular location is the nucleus. It localises to the cytoplasm. It is found in the mitochondrion. The enzyme catalyses S-ubiquitinyl-[E2 ubiquitin-conjugating enzyme]-L-cysteine + [acceptor protein]-L-lysine = [E2 ubiquitin-conjugating enzyme]-L-cysteine + N(6)-ubiquitinyl-[acceptor protein]-L-lysine.. Its pathway is protein modification; protein ubiquitination. Functionally, transcriptional coactivator that interacts with numerous nuclear receptors and coactivators and modulates the transcription of target genes. Interacts with chromatin depending on histone H3 modifications, having the highest affinity for histone H3 that is both unmodified at 'Lys-4' (H3K4me0) and acetylated at 'Lys-23' (H3K23ac). Has E3 protein-ubiquitin ligase activity. During the DNA damage response, participates in an autoregulatory feedback loop with TP53. Early in response to DNA damage, ATM kinase phosphorylates TRIM24 leading to its ubiquitination and degradation. After sufficient DNA repair has occurred, TP53 activates TRIM24 transcription, ultimately leading to TRIM24-mediated TP53 ubiquitination and degradation. Plays a role in the regulation of cell proliferation and apoptosis, at least in part via its effects on p53/TP53 levels. Up-regulates ligand-dependent transcription activation by AR, GCR/NR3C1, thyroid hormone receptor (TR) and ESR1. Modulates transcription activation by retinoic acid (RA) receptors, including RARA. Plays a role in regulating retinoic acid-dependent proliferation of hepatocytes. Also participates in innate immunity by mediating the specific 'Lys-63'-linked ubiquitination of TRAF3 leading to activation of downstream signal transduction of the type I IFN pathway. Additionally, negatively regulates NLRP3/CASP1/IL-1beta-mediated pyroptosis and cell migration probably by ubiquitinating NLRP3. The chain is Transcription intermediary factor 1-alpha (TRIM24) from Homo sapiens (Human).